Here is a 1070-residue protein sequence, read N- to C-terminus: DNA-directed RNA polymerase subunit beta (1070 aa).

The protein belongs to the RNA polymerase beta chain family. In plastids the minimal PEP RNA polymerase catalytic core is composed of four subunits: alpha, beta, beta', and beta''. When a (nuclear-encoded) sigma factor is associated with the core the holoenzyme is formed, which can initiate transcription.

The protein resides in the plastid. It is found in the chloroplast. It catalyses the reaction RNA(n) + a ribonucleoside 5'-triphosphate = RNA(n+1) + diphosphate. DNA-dependent RNA polymerase catalyzes the transcription of DNA into RNA using the four ribonucleoside triphosphates as substrates. The sequence is that of DNA-directed RNA polymerase subunit beta from Populus alba (White poplar).